The primary structure comprises 254 residues: Type III pantothenate kinase (254 aa).

6 to 13 is an ATP binding site; the sequence is DVGNTNTV. Residues tyrosine 100 and 107–110 each bind substrate; that span reads GADR. Catalysis depends on aspartate 109, which acts as the Proton acceptor. A K(+)-binding site is contributed by aspartate 129. Threonine 132 contacts ATP. Threonine 184 is a binding site for substrate.

Belongs to the type III pantothenate kinase family. Homodimer. It depends on NH4(+) as a cofactor. The cofactor is K(+).

It localises to the cytoplasm. It catalyses the reaction (R)-pantothenate + ATP = (R)-4'-phosphopantothenate + ADP + H(+). It participates in cofactor biosynthesis; coenzyme A biosynthesis; CoA from (R)-pantothenate: step 1/5. Its function is as follows. Catalyzes the phosphorylation of pantothenate (Pan), the first step in CoA biosynthesis. The sequence is that of Type III pantothenate kinase from Anaeromyxobacter sp. (strain Fw109-5).